We begin with the raw amino-acid sequence, 68 residues long: Large ribosomal subunit protein uL29 (68 aa).

The protein belongs to the universal ribosomal protein uL29 family.

In Rhodopseudomonas palustris (strain BisB18), this protein is Large ribosomal subunit protein uL29.